The primary structure comprises 237 residues: 2-C-methyl-D-erythritol 4-phosphate cytidylyltransferase (237 aa).

Belongs to the IspD/TarI cytidylyltransferase family. IspD subfamily.

It catalyses the reaction 2-C-methyl-D-erythritol 4-phosphate + CTP + H(+) = 4-CDP-2-C-methyl-D-erythritol + diphosphate. The protein operates within isoprenoid biosynthesis; isopentenyl diphosphate biosynthesis via DXP pathway; isopentenyl diphosphate from 1-deoxy-D-xylulose 5-phosphate: step 2/6. In terms of biological role, catalyzes the formation of 4-diphosphocytidyl-2-C-methyl-D-erythritol from CTP and 2-C-methyl-D-erythritol 4-phosphate (MEP). The chain is 2-C-methyl-D-erythritol 4-phosphate cytidylyltransferase from Vibrio vulnificus (strain CMCP6).